Consider the following 92-residue polypeptide: Small ribosomal subunit protein uS19c (92 aa).

It belongs to the universal ribosomal protein uS19 family.

It is found in the plastid. It localises to the chloroplast. In terms of biological role, protein S19 forms a complex with S13 that binds strongly to the 16S ribosomal RNA. In Platanus occidentalis (Sycamore), this protein is Small ribosomal subunit protein uS19c.